Consider the following 152-residue polypeptide: Cell division protein SepF (152 aa).

Over residues 23-32 (EVAREPEPMQ) the composition is skewed to basic and acidic residues. The interval 23 to 42 (EVAREPEPMQKKTKKEKPSK) is disordered.

This sequence belongs to the SepF family. In terms of assembly, homodimer. Interacts with FtsZ.

It is found in the cytoplasm. Cell division protein that is part of the divisome complex and is recruited early to the Z-ring. Probably stimulates Z-ring formation, perhaps through the cross-linking of FtsZ protofilaments. Its function overlaps with FtsA. In Listeria innocua serovar 6a (strain ATCC BAA-680 / CLIP 11262), this protein is Cell division protein SepF.